A 495-amino-acid polypeptide reads, in one-letter code: Genome polyprotein (495 aa).

Topologically, residues 1–445 are extracellular; the sequence is MRCIGISNRD…LNQVFGTIYG (445 aa). 4 disulfide bridges follow: Cys3-Cys30, Cys60-Cys121, Cys74-Cys105, and Cys92-Cys116. Asn67 carries an N-linked (GlcNAc...) asparagine; by host glycan. The interval 98–111 is fusion peptide; it reads DRGWGNGCGLFGKG. Asn153 is a glycosylation site (N-linked (GlcNAc...) asparagine; by host). Disulfide bonds link Cys185–Cys285 and Cys302–Cys333. A helical membrane pass occupies residues 446-466; the sequence is AAFSGVSWTMKILIGVIITCI. Residues 467–472 are Cytoplasmic-facing; it reads GMNSRS. A helical transmembrane segment spans residues 473–493; that stretch reads TSLSVSLVLVGVVTLYLGGMV. Residues 494-495 lie on the Extracellular side of the membrane; that stretch reads HA.

In terms of assembly, homodimer; in the endoplasmic reticulum and Golgi. Interacts with protein prM. Interacts with non-structural protein 1. Post-translationally, N-glycosylated. Specific enzymatic cleavages in vivo yield mature proteins. Cleavages in the lumen of endoplasmic reticulum are performed by host signal peptidase, wereas cleavages in the cytoplasmic side are performed by serine protease NS3. Signal cleavage at the 2K-4B site requires a prior NS3 protease-mediated cleavage at the 4A-2K site.

The protein localises to the virion membrane. It localises to the host endoplasmic reticulum membrane. Functionally, binds to host cell surface receptor and mediates fusion between viral and cellular membranes. Envelope protein is synthesized in the endoplasmic reticulum in the form of heterodimer with protein prM. They play a role in virion budding in the ER, and the newly formed immature particle is covered with 60 spikes composed of heterodimer between precursor prM and envelope protein E. The virion is transported to the Golgi apparatus where the low pH causes dissociation of PrM-E heterodimers and formation of E homodimers. prM-E cleavage is inefficient, and many virions are only partially matured. These uncleaved prM would play a role in immune evasion. The chain is Genome polyprotein from Aedes aegypti (Yellowfever mosquito).